Consider the following 993-residue polypeptide: uncharacterized protein (993 aa).

Positions 1–28 (MKLFPRSILITLVLSFALNLGIVTKIHA) are cleaved as a signal peptide. 7 helical membrane passes run 331–351 (IVTAFLTLYVMFFGFKLLLAG), 359–379 (YINFILKMIFVTYFSIGINIT), 392–412 (MIQWAFPFLLDGINGLASWVM), 494–514 (MLVSLALSYPLLVISVAAFMV), 521–541 (MISIVILGILAPLFVPMFLFA), 554–574 (MISFLLQPMVVVTFMITMFSV), and 699–719 (IKNILLALVMACFTLYLMYNF). The tract at residues 779–904 (GQGGGASDLE…EKVDSTSKGT (126 aa)) is disordered. Over residues 805–829 (TSAPAVTTPTASSSVASSSPKTVSS) the composition is skewed to low complexity. The segment covering 838 to 850 (PPAPTEAVSPPPA) has biased composition (pro residues). Basic and acidic residues predominate over residues 866–879 (IIRDNNQESKKEID).

The protein belongs to the TrbL/VirB6 family.

It localises to the cell membrane. This is an uncharacterized protein from Rickettsia conorii (strain ATCC VR-613 / Malish 7).